We begin with the raw amino-acid sequence, 498 residues long: Early growth response protein 1 (498 aa).

Disordered stretches follow at residues 137–203 (NASP…TASI) and 287–308 (PSRM…RPYA). Residues 139–163 (SPSSAPSSSPSSSSSSSQSPPLSCS) are compositionally biased toward low complexity. Residues 179-202 (FPNSSPELFPDQSPQPFQNASTAS) show a composition bias toward polar residues. C2H2-type zinc fingers lie at residues 307-331 (YACP…IRIH), 337-359 (FQCR…IRTH), and 365-387 (FACD…TKIH). The segment at 378–422 (DERKRHTKIHLRQKDKKADKATPVSVASPVSSYSPSASTSYPSPV) is disordered. A compositionally biased stretch (basic residues) spans 382–392 (RHTKIHLRQKD). Over residues 398-422 (ATPVSVASPVSSYSPSASTSYPSPV) the composition is skewed to low complexity.

Belongs to the EGR C2H2-type zinc-finger protein family.

The protein localises to the nucleus. It is found in the cytoplasm. Its function is as follows. Transcriptional regulator. Recognizes and binds to the DNA sequence 5'-GCG(T/G)GGGCG-3'(EGR-site) in the promoter region of target genes. Binds double-stranded target DNA, irrespective of the cytosine methylation status. Regulates the transcription of numerous target genes, and thereby plays an important role in regulating the response to growth factors, DNA damage, and ischemia. Plays a role in the regulation of cell survival, proliferation and cell death. Mediates responses to ischemia and hypoxia; regulates the expression of proteins that are involved in inflammatory processes. Plays a role in regulating the expression of circadian clock genes. This chain is Early growth response protein 1, found in Xenopus tropicalis (Western clawed frog).